Reading from the N-terminus, the 598-residue chain is Chromodomain Y-like protein (598 aa).

The disordered stretch occupies residues methionine 1 to lysine 76. Residues proline 44–glutamine 56 show a composition bias toward polar residues. The Chromo domain maps to leucine 61 to threonine 121. Residues leucine 61 to threonine 309 form an interaction with EZH2 region. Residues arginine 65–lysine 76 are compositionally biased toward basic and acidic residues. Serine 88 carries the post-translational modification Phosphoserine. Positions arginine 112–threonine 121 are enriched in basic and acidic residues. The segment at arginine 112–serine 149 is disordered. The span at leucine 122–serine 149 shows a compositional bias: polar residues. N6,N6,N6-trimethyllysine; by EHMT2; alternate is present on lysine 135. Position 135 is an N6,N6-dimethyllysine; by EHMT2; alternate (lysine 135). N6-methyllysine; by EHMT2; alternate is present on lysine 135. Phosphoserine is present on residues serine 170, serine 201, and serine 216. The tract at residues lysine 204–glycine 226 is disordered. The segment at serine 362–lysine 594 is acetyl-CoA-binding domain.

As to quaternary structure, forms multimers and multimerization is required for stable binding to chromatin. Interacts with HDAC1 and HDAC2 via its C-terminal acetyl-CoA-binding domain. Interacts with EZH2, EED, SUZ12, REST, EHMT1 and EHMT2. Part of a complex containing at least CDYL, REST, WIZ, SETB1, EHMT1 and EHMT2. Part of a complex containing at least CDYL, MIER1, MIER2, HDAC1 and HDAC2. Interacts with CHAF1A and CHAF1B; bridging the CAF-1 complex to the MCM2-7 (MCM) complex. Interacts with MCM3 and MCM5; bridging the CAF-1 complex to the MCM2-7 (MCM) complex. Recruited to Xist RNA-coated X chromosome. Interacts with EHMT2 and PRDM9; interaction only takes place when PRDM9 is bound to hotspot DNA. Expressed in the hippocampus with reduced expression in epileptic tissue compared to normal adjacent tissue (at protein level). Ubiquitous. Expressed at moderate levels in all tissues examined. Isoform 2: Most abundantly expressed isoform.

It is found in the nucleus. Its subcellular location is the chromosome. The enzyme catalyses 3-hydroxybutanoyl-CoA = (2E)-butenoyl-CoA + H2O. Functionally, chromatin reader protein that recognizes and binds histone H3 trimethylated at 'Lys-9', dimethylated at 'Lys-27' and trimethylated at 'Lys-27' (H3K9me3, H3K27me2 and H3K27me3, respectively). Part of multimeric repressive chromatin complexes, where it is required for transmission and restoration of repressive histone marks, thereby preserving the epigenetic landscape. Required for chromatin targeting and maximal enzymatic activity of Polycomb repressive complex 2 (PRC2); acts as a positive regulator of PRC2 activity by bridging the pre-existing histone H3K27me3 and newly recruited PRC2 on neighboring nucleosomes. Acts as a corepressor for REST by facilitating histone-lysine N-methyltransferase EHMT2 recruitment and H3K9 dimethylation at REST target genes for repression. Involved in X chromosome inactivation in females: recruited to Xist RNA-coated X chromosome and facilitates propagation of H3K9me2 by anchoring EHMT2. Promotes EZH2 accumulation and H3K27me3 methylation at DNA double strand breaks (DSBs), thereby facilitating transcriptional repression at sites of DNA damage and homology-directed repair of DSBs. Required for neuronal migration during brain development by repressing expression of RHOA. By repressing the expression of SCN8A, contributes to the inhibition of intrinsic neuronal excitability and epileptogenesis. In addition to acting as a chromatin reader, acts as a hydro-lyase. Shows crotonyl-coA hydratase activity by mediating the conversion of crotonyl-CoA ((2E)-butenoyl-CoA) to beta-hydroxybutyryl-CoA (3-hydroxybutanoyl-CoA), thereby acting as a negative regulator of histone crotonylation. Histone crotonylation is required during spermatogenesis; down-regulation of histone crotonylation by CDYL regulates the reactivation of sex chromosome-linked genes in round spermatids and histone replacement in elongating spermatids. By regulating histone crotonylation and trimethylation of H3K27, may be involved in stress-induced depression-like behaviors, possibly by regulating VGF expression. Its function is as follows. Not able to recognize and bind histone H3K9me3, histone H3K27me2 and histone H3K27me3, due to the presence of a N-terminal extension that inactivates the chromo domain. Not able to recognize and bind histone H3K9me3, histone H3K27me2 and histone H3K27me3, due to the absence of the chromo domain. Acts as a negative regulator of isoform 2 by displacing isoform 2 from chromatin. The protein is Chromodomain Y-like protein of Homo sapiens (Human).